The chain runs to 684 residues: MADPSKYRPAPGSIPTDPGVYKFRDENRRVIYVGKAKNLRARLSNYFQDITQLHPRTRQMVLTAASVEWTVVASEVEALQLEYTWIKRFDPRFNVMYRDDKTYPMLAVSVGESIPRAFFYRGPRRKGVRYFGPYSHAWAVRESLDLLTRIFPMRTCAKGVFNRHERLGRPCLLGYIGKCDAPCIGRVSPEEHRETVNQLISFMNGNTAPVRKRVTQRMEEAAENLEFELAARLRDDLGAIDKLMEQQAVVLPDGTDADLIAFSSDELEAAVQIFHVRTGRIRGQRGWVVERSGDQATTDVVEEGQADPGLPALIQNFLIQFYSDAVERQRQEAAEDAKLERRGVDQESHAEPRQGNAIPREILVQALPEEAEEVKIVLEELRGAQIDVRVPQRGDKRALLETVERNAKEQLKQHKLKRVGDLTARSAALQELQEALGMDSAPLRIECTDISHIQGTDVVASLVVFEDGLPRKSDYRRYRIKEAAGDGRSNDVGSIAEVTRRRFKHHHDDKRAVPDEELENTTFAEEMVREEAASQTKRSSYPPQLFIVDGGAPQVAAAQAVFDELGIVDVTLIGLAKRLEEVWVPGDDEPVILPRNSQALFLLQHLRDEAHRVAISYHRQQRSKRMRSSVLDAVPGLGPQRRTDLVKHFGSVKKLKEASVEEIAEVKGFGPKLAQTVFDHLHAS.

The 80-residue stretch at 16–95 folds into the GIY-YIG domain; it reads TDPGVYKFRD…IKRFDPRFNV (80 aa). Positions 208-243 constitute a UVR domain; that stretch reads APVRKRVTQRMEEAAENLEFELAARLRDDLGAIDKL. A compositionally biased stretch (basic and acidic residues) spans 332-352; that stretch reads EAAEDAKLERRGVDQESHAEP. The interval 332–357 is disordered; sequence EAAEDAKLERRGVDQESHAEPRQGNA.

It belongs to the UvrC family. In terms of assembly, interacts with UvrB in an incision complex.

The protein resides in the cytoplasm. Its function is as follows. The UvrABC repair system catalyzes the recognition and processing of DNA lesions. UvrC both incises the 5' and 3' sides of the lesion. The N-terminal half is responsible for the 3' incision and the C-terminal half is responsible for the 5' incision. In Corynebacterium aurimucosum (strain ATCC 700975 / DSM 44827 / CIP 107346 / CN-1) (Corynebacterium nigricans), this protein is UvrABC system protein C.